We begin with the raw amino-acid sequence, 505 residues long: Chemotaxis regulatory protein ChePep (505 aa).

Disordered stretches follow at residues 154-403 (EPNN…EDIP) and 420-465 (EAVA…SSPL). Basic and acidic residues-rich tracts occupy residues 172–263 (EEVK…EKTQ), 289–311 (ENKE…EVVT), 337–346 (QAHELEKQEI), 359–373 (QDKE…KEET), and 386–398 (PQEK…HYES). The span at 440–451 (TETSKNENNTET) shows a compositional bias: low complexity.

In terms of assembly, interacts with CheZ; the interaction is essential for each other polar localization.

Its subcellular location is the cytoplasm. Its function is as follows. Plays an essential role in chemotaxis. Regulates flagellar rotation through the formation of a complex with chemotaxis protein CheZ. Plays a major role in colonization of the stomach. This is Chemotaxis regulatory protein ChePep from Helicobacter pylori (strain ATCC 700392 / 26695) (Campylobacter pylori).